Consider the following 165-residue polypeptide: Thiol peroxidase (165 aa).

The 148-residue stretch at 18 to 165 (PQKGAQAPAF…PNYAAALAAL (148 aa)) folds into the Thioredoxin domain. C60 functions as the Cysteine sulfenic acid (-SOH) intermediate in the catalytic mechanism. C60 and C94 are disulfide-bonded.

The protein belongs to the peroxiredoxin family. Tpx subfamily. Homodimer.

It carries out the reaction a hydroperoxide + [thioredoxin]-dithiol = an alcohol + [thioredoxin]-disulfide + H2O. Functionally, thiol-specific peroxidase that catalyzes the reduction of hydrogen peroxide and organic hydroperoxides to water and alcohols, respectively. Plays a role in cell protection against oxidative stress by detoxifying peroxides. This is Thiol peroxidase from Pseudomonas aeruginosa (strain ATCC 15692 / DSM 22644 / CIP 104116 / JCM 14847 / LMG 12228 / 1C / PRS 101 / PAO1).